The following is a 353-amino-acid chain: Methylthioribose-1-phosphate isomerase (353 aa).

The Proton donor role is filled by Asp-241.

Belongs to the eIF-2B alpha/beta/delta subunits family. MtnA subfamily.

The protein resides in the cytoplasm. It is found in the nucleus. The enzyme catalyses 5-(methylsulfanyl)-alpha-D-ribose 1-phosphate = 5-(methylsulfanyl)-D-ribulose 1-phosphate. Its pathway is amino-acid biosynthesis; L-methionine biosynthesis via salvage pathway; L-methionine from S-methyl-5-thio-alpha-D-ribose 1-phosphate: step 1/6. Functionally, catalyzes the interconversion of methylthioribose-1-phosphate (MTR-1-P) into methylthioribulose-1-phosphate (MTRu-1-P). The sequence is that of Methylthioribose-1-phosphate isomerase (mri1) from Danio rerio (Zebrafish).